We begin with the raw amino-acid sequence, 171 residues long: Calcium channel flower homolog (171 aa).

Residues 1–31 (MSGSGAAGAAAGPAPPAQEEGMTWWYRWLCR) are Cytoplasmic-facing. The chain crosses the membrane as a helical span at residues 32 to 52 (LAGVLGAVSCAISGLFNCVTI). Residues 53–56 (HPLN) are Extracellular-facing. Residues 57 to 77 (IAAGVWMIMNAFILLLCEAPF) form a helical membrane-spanning segment. At 78–101 (CCQFVEFANTVAEKVDRLRSWQKA) the chain is on the cytoplasmic side. Residues 102–122 (VFYCGMAIVPIVMSLTLTTLL) traverse the membrane as a helical segment. At 123–124 (GN) the chain is on the extracellular side. A helical membrane pass occupies residues 125–141 (AIAFATGVLYGLSALGK). Residues 142-171 (KGDAISYARIQQQRQQADEEKLAETFEGEL) lie on the Cytoplasmic side of the membrane.

The protein belongs to the calcium channel flower family. Interacts with adaptor protein complex 2 (AP-2). Expressed in neurons in the brain (at protein level). Expressed in neuroblastoma cell lines (at protein level). Expressed in cytotoxic T-lymphoocytes (at protein level). As to expression, low levels of expression in various tissues including the brain, eye, heart, liver and colon. Expression in the heart is at slightly higher levels than isoform 3. Expressed in skin cells. In terms of tissue distribution, very low levels of expression in the brain, liver and eye. Detected at very low levels of expression in skin cells. Expressed in various tissues, with highest levels of expression in the brain and eye. Expressed in skin cells. Low levels of expression in the liver, colon, heart and spleen. As to expression, barely detected in the brain and liver.

Its subcellular location is the cell membrane. It localises to the vesicle. In terms of biological role, transmembrane protein which mediates synaptic endocytosis and fitness-based cell culling. In response to different stimulus strengths, controls two major modes of synaptic vesicle (SV) retrieval in hippocampal neurons; Clathrin-mediated endocytosis (CME) in response to mild stimulation and activity-dependent bulk endocytosis (ADBE) in response to strong stimulation. In cytotoxic T-lymphoocytes (CTLs) facilitates calcium-dependent endocytosis of cytotoxic granules (CGs) at the immuno synapse. Different isoforms work as fitness fingerprints in 'loser' and 'winner' cells and thereby mediate win/lose decisions as part of the cell competition process. The protein is Calcium channel flower homolog (Cacfd1) of Mus musculus (Mouse).